Reading from the N-terminus, the 548-residue chain is Chaperonin GroEL (548 aa).

ATP is bound by residues 29 to 32 (TLGP), 86 to 90 (DGTTT), G413, 476 to 478 (NAL), and D492. Residues 522–531 (PDEDDNDDGD) show a composition bias toward acidic residues. The tract at residues 522-548 (PDEDDNDDGDMGGGAPGMGGMGGMPGM) is disordered. The span at 532–548 (MGGGAPGMGGMGGMPGM) shows a compositional bias: gly residues.

Belongs to the chaperonin (HSP60) family. As to quaternary structure, forms a cylinder of 14 subunits composed of two heptameric rings stacked back-to-back. Interacts with the co-chaperonin GroES.

It is found in the cytoplasm. The catalysed reaction is ATP + H2O + a folded polypeptide = ADP + phosphate + an unfolded polypeptide.. Its function is as follows. Together with its co-chaperonin GroES, plays an essential role in assisting protein folding. The GroEL-GroES system forms a nano-cage that allows encapsulation of the non-native substrate proteins and provides a physical environment optimized to promote and accelerate protein folding. The polypeptide is Chaperonin GroEL (Natranaerobius thermophilus (strain ATCC BAA-1301 / DSM 18059 / JW/NM-WN-LF)).